Reading from the N-terminus, the 897-residue chain is N-terminal acetyltransferase A complex auxiliary subunit NAA15 (897 aa).

TPR repeat units follow at residues 77 to 110 (HVCWHVLGLLYRSDREYREAIKCYRNALRIDPDN), 111 to 144 (LEILRDLSLLQAQMRDLSGFVETRQQLLTLKPNH), 189 to 222 (TEMILYKVSLLEESGSFDKALEELHKKEPKIVDK), 223 to 256 (LSYKEQEVSLLSKVGRLEEANKLYRVLLSMNPDN), 298 to 331 (SSAVKRIPLDFLQDENFKEAVAKYIKPLLTKGVP), 380 to 413 (LWTLFFLAQHYDRRGQYDVALCKIDEAIAHTPTV), and 488 to 523 (QCMWYDLASGDSYFRQGDLGRALKKFLAVEKHYADI). Disordered stretches follow at residues 578–640 (KSTA…DPHG) and 863–897 (SRKSNENGDTPNHPMGQTELSDGQLEAFKSLSVAT). Residues 602-617 (KAEARAKKEAESKSEE) are compositionally biased toward basic and acidic residues. The segment covering 863 to 872 (SRKSNENGDT) has biased composition (polar residues).

In terms of assembly, part of the NatA complex. Associates with ribosomes. Interacts with NAA10. Expressed in leaves, roots, shoots and flowers.

Functionally, auxiliary subunit of the NatA N-alpha-acetyltransferase complex. Required for male gametocyte development, embryogenesis, suspensor development and the formation of the quiescent center (QC) in the root meristem. Involved in plant immunity through the regulation of SNC1 stability. Required for embryo development. The chain is N-terminal acetyltransferase A complex auxiliary subunit NAA15 from Arabidopsis thaliana (Mouse-ear cress).